The primary structure comprises 188 residues: Proline-rich protein 3 (188 aa).

The interval 1–157 (MPKRKKQNHH…DPQVMEDKSD (157 aa)) is disordered. 2 stretches are compositionally biased toward pro residues: residues 35–46 (IGPPSLLGPPPM) and 69–82 (LIPP…PPWG). The span at 83 to 96 (RGPIRRGLGPRSSP) shows a compositional bias: low complexity. Residues 145–157 (PKDDPQVMEDKSD) show a composition bias toward basic and acidic residues. The C3H1-type zinc finger occupies 155–183 (KSDRPVCRHFAKKGHCRYEDLCAFYHPGV).

This is Proline-rich protein 3 (PRR3) from Homo sapiens (Human).